Reading from the N-terminus, the 1163-residue chain is Voltage-gated inwardly rectifying potassium channel KCNH2 (1163 aa).

Residues 1-405 (MPVRRGHVAP…RIHRWTILHY (405 aa)) lie on the Cytoplasmic side of the membrane. The 72-residue stretch at 17-88 (TIIRKFEGQS…AAQIAQALLG (72 aa)) folds into the PAS domain. A PAC domain is found at 92–144 (RKVEIAFYRKDGSCFLCLVDVVPVKNEDGAVIMFILNFEVVMEKDMVGSPAHD). The interval 235-286 (VGPASASPVASIPGPHPSPRAQSLNPDASGSSCSLARTRSRESCASVRRASS) is disordered. A phosphoserine mark is found at S239 and S245. Residues 254–271 (RAQSLNPDASGSSCSLAR) are compositionally biased toward polar residues. A phosphoserine mark is found at S285, S286, S322, and S353. The helical transmembrane segment at 406-426 (SPFKAVWDWLILLLVIYTAVF) threads the bilayer. The Extracellular portion of the chain corresponds to 427 to 452 (TPYSAAFLLKETEDGSQAPDCGYACQ). A helical membrane pass occupies residues 453 to 473 (PLAVVDLLVDIMFIVDILINF). The Cytoplasmic portion of the chain corresponds to 474–497 (RTTYVNANEEVVSHPGRIAVHYFK). Residues 498 to 518 (GWFLIDMVAAIPFDLLIFGSG) form a helical membrane-spanning segment. The Extracellular portion of the chain corresponds to 519-522 (SEEL). The chain crosses the membrane as a helical; Voltage-sensor span at residues 523 to 543 (IGLLKTARLLRLVRVARKLDR). The Cytoplasmic segment spans residues 544-549 (YSEYGA). The chain crosses the membrane as a helical span at residues 550–570 (AVLFLLMCTFALIAHWLACIW). Topologically, residues 571–613 (YAIGNMEQPHMDSHIGWLHNLGDQIGKPYNSSGLGGPSIKDKY) are extracellular. N-linked (GlcNAc...) asparagine glycosylation occurs at N600. The segment at residues 614 to 634 (VTALYFTFSSLTSVGFGNVSP) is an intramembrane region (pore-forming). The Selectivity filter signature appears at 626–631 (SVGFGN). Residues 635–640 (NTNSEK) lie on the Extracellular side of the membrane. A helical transmembrane segment spans residues 641–661 (IFSICVMLIGSLMYASIFGNV). Residues 662–1163 (SAIIQRLYSG…LHRHGSDPGS (502 aa)) lie on the Cytoplasmic side of the membrane. A cNMP-binding domain region spans residues 744–844 (PFRGATKGCL…IHRDDLLEVL (101 aa)). Residues S873 and S876 each carry the phosphoserine modification. Disordered stretches follow at residues 873–992 (SPSS…NPLS), 1015–1043 (ELPR…GDVE), and 1126–1163 (AGAP…DPGS). The span at 885 to 894 (RQRKRKLSFR) shows a compositional bias: basic residues. A compositionally biased stretch (low complexity) spans 932 to 943 (GESPSSGPSSPE). Residue R1018 is modified to Omega-N-methylarginine. Residues 1039 to 1066 (RGDVESRLDALQRQLNRLETRLSADMAT) are a coiled coil. A Phosphoserine modification is found at S1141.

Belongs to the potassium channel family. H (Eag) (TC 1.A.1.20) subfamily. Kv11.1/KCNH2 sub-subfamily. As to quaternary structure, the potassium channel is probably composed of a homo- or heterotetrameric complex of pore-forming alpha subunits that can associate with modulating beta subunits. Interacts with DNAJB12 and DNAJB14; chaperones DNAJB12 and DNAJB14 promote tetramerization. Heteromultimer with KCNH6/ERG2 and KCNH7/ERG3. Interacts with ALG10B. Forms a stable complex with KCNE1 or KCNE2, and that this heteromultimerization regulates Inward rectifier potassium channel activity. Interacts with CANX. The core-glycosylated, but not the fully glycosylated form interacts with RNF207. Interacts with NDFIP1 and NDFIP2; this interaction decreases the cell membrane expression by targeting KCNH2, through interaction with NEDD4L, for the degradation through the multivesicular bodies (MVBs)-lysosomal pathway. In terms of processing, phosphorylated on serine and threonine residues. Phosphorylation by PKA inhibits ion conduction. In terms of tissue distribution, highly expressed in brain and testis, slightly less so in heart, adrenal, retina and thymus. Detected at lower levels in lung, soleus, tibialis, and at very low levels in cornea and lens. A shorter transcript is detected in skeletal muscle. Found in pituitary.

It is found in the cell membrane. It catalyses the reaction K(+)(in) = K(+)(out). Pore-forming (alpha) subunit of voltage-gated inwardly rectifying potassium channel. Characterized by unusual gating kinetics by producing relatively small outward currents during membrane depolarization and large inward currents during subsequent repolarization which reflect a rapid inactivation during depolarization and quick recovery from inactivation but slow deactivation (closing) during repolarization. Channel properties are modulated by cAMP and subunit assembly. Forms a stable complex with KCNE1 or KCNE2, and that this heteromultimerization regulates inward rectifier potassium channel activity. This Rattus norvegicus (Rat) protein is Voltage-gated inwardly rectifying potassium channel KCNH2.